The sequence spans 280 residues: 2-dehydro-3-deoxyphosphooctonate aldolase (280 aa).

The protein belongs to the KdsA family.

The protein resides in the cytoplasm. The catalysed reaction is D-arabinose 5-phosphate + phosphoenolpyruvate + H2O = 3-deoxy-alpha-D-manno-2-octulosonate-8-phosphate + phosphate. It functions in the pathway carbohydrate biosynthesis; 3-deoxy-D-manno-octulosonate biosynthesis; 3-deoxy-D-manno-octulosonate from D-ribulose 5-phosphate: step 2/3. Its pathway is bacterial outer membrane biogenesis; lipopolysaccharide biosynthesis. The protein is 2-dehydro-3-deoxyphosphooctonate aldolase of Coxiella burnetii (strain CbuG_Q212) (Coxiella burnetii (strain Q212)).